The following is a 607-amino-acid chain: MDFLSALENAENHIVSALPGDAVCLRPNSSRPQETPQAHSSKLSPSYPASNRSVLGLCFPTSRMPETIKEPPCKGAMFLRPVSISSSSSGSQQRMTGTKVSQESSGRQSSAAHSGFIFESCQHGIGDFETLDQDEFDKALASMEFEGAGLEPEVNRGASQILPAKHCEDPVLAKKARVADLSGSFQEGPIVHCRKPWPSLRPTTATGGLPVPATSDISTSHQRGSPVPAPQYSPVAGRTLQNGPQNYVPGQPLQSPRAWSSGKPRFSGPQCPHSSSAAFCRGPSPSRAPVSSVESPFSTPRSTSTTVTQPALQTPVVTNHLVQLVTATNRTPQQPSRPSIRAKTRRFPGPAGLLPHQHSGENLEEIMVSTPQTPTHGALAKFQTEIVTSSQGSVEEDFGRGPWLTMKSALGLDEGDPTCFLYTYSIVMVLRKAALKQLPRNKVPNMAVMIKSLTRSTMDASVVFKDPTGEMLGTVHRVLLETHQNELKPGSVLLLKQIGVFSPSLRNHYLNVTPNNLVHIYSLDSGDGDFLKPPQPLPKDLGNSHGSLQPDVAAEPTQGLRTAQNPPASPEEELPEADDLDGLLSELPEDFFCEPSGWSCLKTGHPP.

4 disordered regions span residues 25-49 (LRPNSSRPQETPQAHSSKLSPSYPA), 84-108 (ISSSSSGSQQRMTGTKVSQESSGRQ), 196-308 (PWPS…TTVT), and 531-581 (LKPP…DDLD). 2 stretches are compositionally biased toward polar residues: residues 27–49 (PNSSRPQETPQAHSSKLSPSYPA) and 92–108 (QQRMTGTKVSQESSGRQ). The residue at position 30 (Ser-30) is a Phosphoserine. Arg-281 is modified (asymmetric dimethylarginine). Low complexity predominate over residues 295 to 308 (SPFSTPRSTSTTVT). Over residues 570–581 (PEEELPEADDLD) the composition is skewed to acidic residues.

In terms of assembly, interacts with MCM8; this interaction is necessary for MCM8-MCM9 helicase complex recruitment to DNA damage sites. Interacts with RPA1; this interaction associates HROB with the RPA complex.

The protein resides in the nucleus. The protein localises to the chromosome. In terms of biological role, DNA-binding protein involved in homologous recombination that acts by recruiting the MCM8-MCM9 helicase complex to sites of DNA damage to promote DNA repair synthesis. This chain is Homologous recombination OB-fold protein, found in Rattus norvegicus (Rat).